A 250-amino-acid chain; its full sequence is 2,3-bisphosphoglycerate-dependent phosphoglycerate mutase (250 aa).

Substrate-binding positions include 10–17 (RHGESQWN), 23–24 (TG), arginine 62, 89–92 (ERHY), lysine 100, 116–117 (RR), and 185–186 (GN). The active-site Tele-phosphohistidine intermediate is the histidine 11. Glutamate 89 functions as the Proton donor/acceptor in the catalytic mechanism.

Belongs to the phosphoglycerate mutase family. BPG-dependent PGAM subfamily. Homodimer.

The enzyme catalyses (2R)-2-phosphoglycerate = (2R)-3-phosphoglycerate. Its pathway is carbohydrate degradation; glycolysis; pyruvate from D-glyceraldehyde 3-phosphate: step 3/5. Catalyzes the interconversion of 2-phosphoglycerate and 3-phosphoglycerate. This Erwinia tasmaniensis (strain DSM 17950 / CFBP 7177 / CIP 109463 / NCPPB 4357 / Et1/99) protein is 2,3-bisphosphoglycerate-dependent phosphoglycerate mutase.